The sequence spans 203 residues: Thymidylate kinase (203 aa).

14-21 (GGEGSGKS) provides a ligand contact to ATP.

It belongs to the thymidylate kinase family.

The catalysed reaction is dTMP + ATP = dTDP + ADP. Phosphorylation of dTMP to form dTDP in both de novo and salvage pathways of dTTP synthesis. This is Thymidylate kinase from Rickettsia canadensis (strain McKiel).